Here is a 234-residue protein sequence, read N- to C-terminus: UPF0173 metal-dependent hydrolase Msp_0516 (234 aa).

Belongs to the UPF0173 family.

The protein is UPF0173 metal-dependent hydrolase Msp_0516 of Methanosphaera stadtmanae (strain ATCC 43021 / DSM 3091 / JCM 11832 / MCB-3).